The following is a 397-amino-acid chain: Lysophospholipid transporter LplT (397 aa).

The Periplasmic segment spans residues 1–17 (MSESVHTNTSLWSKGMK). Residues 18–38 (AVIVAQFLSAFGDNALLFATL) traverse the membrane as a helical segment. Residues 39–52 (ALLKAQFYPEWSQP) are Cytoplasmic-facing. Residues 53–73 (ILQMVFVGAYILFAPFVGQVA) traverse the membrane as a helical segment. The Periplasmic segment spans residues 74–90 (DSFAKGRVMMFANGLKL). The helical transmembrane segment at 91–111 (LGAASICFGINPFLGYTLVGV) threads the bilayer. The Cytoplasmic portion of the chain corresponds to 112–144 (GAAAYSPAKYGILGELTTGSKLVKANGLMEAST). Residues 145 to 165 (IAAILLGSVAGGVLADWHVLV) form a helical membrane-spanning segment. Residue alanine 166 is a topological domain, periplasmic. A helical transmembrane segment spans residues 167–187 (LAACALAYGGAVVANIYIPKL). Topologically, residues 188-226 (AAARPGQSWNLINMTRSFLNACTSLWCNGETRFSLVGTS) are cytoplasmic. A helical membrane pass occupies residues 227–247 (LFWGAGVTLRFLLVLWVPVAL). At 248 to 256 (GITDNATPT) the chain is on the periplasmic side. A helical membrane pass occupies residues 257–277 (YLNAMVAIGIVVGAGAAAKLV). The Cytoplasmic portion of the chain corresponds to 278–280 (TLE). Residues 281-301 (TVSRCMPAGILIGVVVLIFSL) form a helical membrane-spanning segment. Residues 302-304 (QHE) are Periplasmic-facing. Residues 305–325 (LLPAYALLMLIGVLGGFFVVP) traverse the membrane as a helical segment. At 326–343 (LNALLQERGKKSVGAGNA) the chain is on the cytoplasmic side. The helical transmembrane segment at 344-364 (IAVQNLGENSAMLLMLGIYSL) threads the bilayer. Topologically, residues 365 to 366 (AV) are periplasmic. Residues 367–387 (MVGIPVVPIGIGFGALFALAI) traverse the membrane as a helical segment. Over 388–397 (TALWIWQRRH) the chain is Cytoplasmic.

It belongs to the major facilitator superfamily. LplT (TC 2.A.1.42) family.

It is found in the cell inner membrane. Functionally, catalyzes the facilitated diffusion of 2-acyl-glycero-3-phosphoethanolamine (2-acyl-GPE) into the cell. The polypeptide is Lysophospholipid transporter LplT (Shigella dysenteriae serotype 1 (strain Sd197)).